A 420-amino-acid chain; its full sequence is Gamma-glutamyl phosphate reductase (420 aa).

Belongs to the gamma-glutamyl phosphate reductase family.

The protein resides in the cytoplasm. The catalysed reaction is L-glutamate 5-semialdehyde + phosphate + NADP(+) = L-glutamyl 5-phosphate + NADPH + H(+). The protein operates within amino-acid biosynthesis; L-proline biosynthesis; L-glutamate 5-semialdehyde from L-glutamate: step 2/2. Its function is as follows. Catalyzes the NADPH-dependent reduction of L-glutamate 5-phosphate into L-glutamate 5-semialdehyde and phosphate. The product spontaneously undergoes cyclization to form 1-pyrroline-5-carboxylate. This is Gamma-glutamyl phosphate reductase from Streptococcus pneumoniae (strain ATCC 700669 / Spain 23F-1).